The sequence spans 67 residues: Protein AaeX (67 aa).

2 helical membrane-spanning segments follow: residues 3–23 (LFPVIVIFGLSFPPIFFELLL) and 43–63 (FVWHPALFNTALYCCLFYLLS).

The protein belongs to the AaeX family.

It localises to the cell membrane. The protein is Protein AaeX of Cronobacter sakazakii (strain ATCC BAA-894) (Enterobacter sakazakii).